The sequence spans 1270 residues: MSSVAVLTQESFAEHRSGLTQQQVKVTALNSEEENDPPTYKEAFPPLPEKAPCLEAAQEPSGPWSKIRPIKASVITQVFHVPLEERKYKDMNQFGEGEQAKICLDIMQKTGAHLELSLAKDQGLSIMVSGKLEAVMKARKEIVARLQTQASATVAIPKEHHRFVIGKNGEKLQDLELKTATKIQIPRPDDPSNQIKITGTKEGIEKARHEILLISAEQDKRAVERLDVEKVYHPFIAGPYNKLVSELMQDTGTRINIPPPSVNKTEIVFTGEKEQLAQAVARVKKIYEEKKKKTTTIAVEVKKSQHKYVIGRKGNSLQEILEKTGVSVEIPPTDSSSETVILRGEPEKLGQALTEVYAKANSFTVSSVSAPSWLHRFIIGLFGQNLAKITQQMPKIHIEFTEGEDKITSEGPTEDVNVAQEQIEVMVKDLINRTDYAEINVDHKFHRHLIGKNGANINRIKDLYKVSVRIPPDNEKSNLIRIEGDPQGVQQAKKELLELASRMENERTKDLIIEQKFHRTIIGQKGERIREIREKFPEVIINFPDPAHKSDIVQLRGPKNEVEKCTKYMQKMVADLVENSFSISVPIFKQFHKNIIGKGGANIKKIREESNTKIDLPGREQATQRQLLSQGREQTVKLLRHRILAIQKELANITEVEVSIPSKLHNSLIGAKGRFIRSIMEECGGVHIHFPTEGSGSATVTIRAQPRTWRKPRSSCCTWAEEKQTKSYTVDLRAKPEYHKFLIGKGGGNIRKVRDNTGARIIFPTSEDKDQELITIMGTEEAVKEAQKELEALIKNLDNVVEDSMVVDPKHHRHFVIRRGQVLREIADEYGGVMVRLPTVSGTQSDKVTLKGAKDCVEAAKKRIQEIIEDLEAQVTIECTIPQKFHRSIMGPKGSRIQQITRDYGVQIKFPDREENPAPVAEPALQENGEEGGEGKDGKDADPSSPRKCDIIIISGRREKCEAAKEALQALVPVTIEVEVPFDLHRYIIGQKGSGIRKMMDEFEVNIQVPAPELQSSDIITITGLAANLDRAKAGLLERVKELQAEQEDRALRSFKLTVTVDPKYHPKIIGRKGAVITQIRTEHEVNIQFPDKDDESQAQDQITITGYEKNAEAARDAIMKIVGELEQMVSEDVTLDHRVHARIIGARGKAIRKIMDEFKVDIRFPQSGAPDPNCVTVTGLPENVEEAIDHILNLEEEYLADVVDNEAMQVYMKPSSHEESKVPSKGFVVRDAPCGTVNNEKAPDMSSSEDFPSFGAQVAPKTLPWGPKR.

A compositionally biased stretch (polar residues) spans 1-11; it reads MSSVAVLTQES. 2 disordered regions span residues 1–23 and 28–47; these read MSSV…TQQQ and ALNS…FPPL. 11 consecutive KH domains span residues 150–188, 219–260, 291–333, 360–402, 431–473, 504–545, 577–619, 651–693, 724–766, 798–840, and 872–913; these read ASAT…IPRP, DKRA…IPPP, KKKT…IPPT, ANSF…EFTE, INRT…IPPD, ENER…NFPD, VENS…LPGR, ANIT…FPTE, QTKS…FPTS, DNVV…LPTV, and EAQV…FPDR. The segment at 911–947 is disordered; sequence PDREENPAPVAEPALQENGEEGGEGKDGKDADPSSPR. Residues 933–947 are compositionally biased toward basic and acidic residues; it reads GEGKDGKDADPSSPR. 3 KH domains span residues 970–1012, 1051–1093, and 1126–1168; these read ALVP…VPAP, ALRS…FPDK, and LEQM…FPQS. Positions 1217–1270 are disordered; it reads SHEESKVPSKGFVVRDAPCGTVNNEKAPDMSSSEDFPSFGAQVAPKTLPWGPKR.

It localises to the cytoplasm. The chain is Vigilin (HDLBP) from Gallus gallus (Chicken).